We begin with the raw amino-acid sequence, 421 residues long: ATP-dependent RNA helicase RhlB (421 aa).

Positions 9 to 37 (THFADLPINEQVVKALSAANFSHCTPIQA) match the Q motif motif. The Helicase ATP-binding domain maps to 40–216 (LPPLLEGNDI…YEHMDNPTHV (177 aa)). 53 to 60 (AQTGTGKT) is an ATP binding site. The DEAD box motif lies at 162 to 165 (DEAD). The 148-residue stretch at 240–387 (KMALLLSLME…VTEYQADALL (148 aa)) folds into the Helicase C-terminal domain. Residues 389 to 421 (DVTPPKPRHKKRMQNGRNPQKRQSSGSRNRRKP) are disordered. Over residues 403–415 (NGRNPQKRQSSGS) the composition is skewed to polar residues.

The protein belongs to the DEAD box helicase family. RhlB subfamily. As to quaternary structure, component of the RNA degradosome, which is a multiprotein complex involved in RNA processing and mRNA degradation.

It is found in the cytoplasm. It catalyses the reaction ATP + H2O = ADP + phosphate + H(+). In terms of biological role, DEAD-box RNA helicase involved in RNA degradation. Has RNA-dependent ATPase activity and unwinds double-stranded RNA. The polypeptide is ATP-dependent RNA helicase RhlB (Pseudoalteromonas atlantica (strain T6c / ATCC BAA-1087)).